The sequence spans 194 residues: Transmembrane protein 212 (194 aa).

The next 5 membrane-spanning stretches (helical) occupy residues 11–31 (ILVTLGILSVCSGVIAFFPVF), 44–64 (IACPIWNGALAITTGVLLLLA), 76–96 (ATFTFVILSIMGCPLHFAIAL), 99–119 (ALLGPYCFYSFSGIAGTNYLG), and 148–168 (LQALDLCLSFTLLCTSLTVFI).

The protein resides in the membrane. This chain is Transmembrane protein 212 (TMEM212), found in Homo sapiens (Human).